The chain runs to 476 residues: Ribosomal RNA small subunit methyltransferase F (476 aa).

S-adenosyl-L-methionine contacts are provided by residues 125 to 131 (AAAPGSK), E149, D176, and D194. Catalysis depends on C247, which acts as the Nucleophile.

The protein belongs to the class I-like SAM-binding methyltransferase superfamily. RsmB/NOP family.

It is found in the cytoplasm. The enzyme catalyses cytidine(1407) in 16S rRNA + S-adenosyl-L-methionine = 5-methylcytidine(1407) in 16S rRNA + S-adenosyl-L-homocysteine + H(+). Its function is as follows. Specifically methylates the cytosine at position 1407 (m5C1407) of 16S rRNA. The protein is Ribosomal RNA small subunit methyltransferase F of Aeromonas salmonicida (strain A449).